Reading from the N-terminus, the 213-residue chain is ATP-dependent Clp protease proteolytic subunit (213 aa).

S114 functions as the Nucleophile in the catalytic mechanism. Residue H139 is part of the active site.

It belongs to the peptidase S14 family. In terms of assembly, fourteen ClpP subunits assemble into 2 heptameric rings which stack back to back to give a disk-like structure with a central cavity, resembling the structure of eukaryotic proteasomes.

It is found in the cytoplasm. It catalyses the reaction Hydrolysis of proteins to small peptides in the presence of ATP and magnesium. alpha-casein is the usual test substrate. In the absence of ATP, only oligopeptides shorter than five residues are hydrolyzed (such as succinyl-Leu-Tyr-|-NHMec, and Leu-Tyr-Leu-|-Tyr-Trp, in which cleavage of the -Tyr-|-Leu- and -Tyr-|-Trp bonds also occurs).. In terms of biological role, cleaves peptides in various proteins in a process that requires ATP hydrolysis. Has a chymotrypsin-like activity. Plays a major role in the degradation of misfolded proteins. This Pseudomonas entomophila (strain L48) protein is ATP-dependent Clp protease proteolytic subunit.